The following is a 422-amino-acid chain: MEEMMMNDPSAMVIYEEEVTTAPNLPCSLIQQRSWDEEKPIGYELTNTKCYKTPNGVQKTATIQREQLSTSKDFGEQQIVEMDGEFSIEGTDMHAIPCTSSSMQPSTSSNPSSGEHQPVPLRRMAIKIGQRVLRFKVISAEEAPEAPLDTQDSWINDPKPVTTPKALAGLYRCTNCKTYFGNKEVYQRHIQEVHGDARPFRCFNCGMRFANKTSMTHHLKDHSLLKPMFSCDYCPRIFSKLESKTRHHKMHFTRSTCQTCMRFFTTEDALRHHQSTAHPATFDSGPPPEDLLPNGKSARYSCSYCNLRFHFKKDMLVHERIHTGEKPYSCGYCMKSFAQSQALTAHIRTHTKELPYGCGKCDKRFRDNSCLRKHELAAHTDEPIVRPISVAYSNQVQKQMQRQRENRRKQELLIAERHPYRI.

The interval A95–V119 is disordered. Low complexity predominate over residues T99 to S113. C2H2-type zinc fingers lie at residues Y171–H194, F200–H222, F229–H251, S255–H278, Y300–H322, Y328–H350, and Y356–H379.

In terms of tissue distribution, expressed in vulval cells and all somatic gonad structures such as spermatheca, sheath cells, uterine cells and distal tip cells.

Its subcellular location is the nucleus. Functionally, probable zinc finger transcription factor that acts as a transcriptional repressor. Acts redundantly with the transcriptional repressor lin-35 to control the development of somatic gonad lineages. May, in addition, suppress sensitivity to RNAi. The polypeptide is Zinc finger protein zfp-2 (Caenorhabditis elegans).